Reading from the N-terminus, the 200-residue chain is Thymidine kinase (200 aa).

ATP is bound by residues 15 to 22 (GPMYSGKS) and 88 to 91 (DEVQ). Glu-89 serves as the catalytic Proton acceptor. Positions 145, 148, 177, and 180 each coordinate Zn(2+).

It belongs to the thymidine kinase family. In terms of assembly, homotetramer.

The protein resides in the cytoplasm. The catalysed reaction is thymidine + ATP = dTMP + ADP + H(+). In Mycoplasma mobile (strain ATCC 43663 / 163K / NCTC 11711) (Mesomycoplasma mobile), this protein is Thymidine kinase.